Consider the following 263-residue polypeptide: Palmitoyltransferase ZDHHC22 (263 aa).

The Cytoplasmic portion of the chain corresponds to 1–9 (MLALRLLNV). Residues 10 to 30 (VAPAYFLCISLVTFVLQLFLF) traverse the membrane as a helical segment. The Lumenal portion of the chain corresponds to 31–48 (LPSMREDPTATPLFSPAV). A helical transmembrane segment spans residues 49–69 (LHGALFLFLSANALGNYVLVI). Residues 70-125 (QNSPDDLGTCQGTMSQRPQCPPPSTHFCRVCSRVTLRHDHHCFFTGNCIGSRNMRN) lie on the Cytoplasmic side of the membrane. The DHHC domain occupies 91–131 (PPSTHFCRVCSRVTLRHDHHCFFTGNCIGSRNMRNFILFCL). The S-palmitoyl cysteine intermediate role is filled by Cys-111. 2 consecutive transmembrane segments (helical) span residues 126 to 146 (FILF…AGVA) and 147 to 167 (YISA…TLLP). Over 168-182 (TSISQFFSGAVLGSD) the chain is Cytoplasmic. The helical transmembrane segment at 183–203 (MFVILMLYLWFAVGLACAGFC) threads the bilayer. At 204 to 263 (CHQLLLILRGQTRYQVRKGMAVRARPWRKNLQEVFGKRWLLGLLVPMFNVGTESSKQQDK) the chain is on the lumenal side.

This sequence belongs to the DHHC palmitoyltransferase family. Interacts with CNN3.

It is found in the endoplasmic reticulum membrane. Its subcellular location is the golgi apparatus membrane. The catalysed reaction is L-cysteinyl-[protein] + hexadecanoyl-CoA = S-hexadecanoyl-L-cysteinyl-[protein] + CoA. In terms of biological role, palmitoyltransferase that could catalyze the addition of palmitate onto various protein substrates and be involved in a variety of cellular processes. Catalyzes the palmitoylation of KCNMA1, regulating localization of KCNMA1 to the plasma membrane. Might also mediate palmitoylation of CNN3. The chain is Palmitoyltransferase ZDHHC22 from Mus musculus (Mouse).